A 255-amino-acid chain; its full sequence is NAD kinase (255 aa).

D44 acts as the Proton acceptor in catalysis. NAD(+) contacts are provided by residues 44 to 45 (DG), H49, 114 to 115 (NE), D144, A152, 155 to 160 (SAYNLS), and Q216.

It belongs to the NAD kinase family. The cofactor is a divalent metal cation.

The protein resides in the cytoplasm. The enzyme catalyses NAD(+) + ATP = ADP + NADP(+) + H(+). Involved in the regulation of the intracellular balance of NAD and NADP, and is a key enzyme in the biosynthesis of NADP. Catalyzes specifically the phosphorylation on 2'-hydroxyl of the adenosine moiety of NAD to yield NADP. The protein is NAD kinase of Rickettsia bellii (strain OSU 85-389).